Here is a 326-residue protein sequence, read N- to C-terminus: DNA-directed RNA polymerase subunit alpha (326 aa).

The interval 1-230 is alpha N-terminal domain (alpha-NTD); the sequence is MLKIEKQAKA…LHLDPFLEIG (230 aa). The alpha C-terminal domain (alpha-CTD) stretch occupies residues 249 to 326; the sequence is DIQVIDDKSH…YDLEKNGSPE (78 aa).

The protein belongs to the RNA polymerase alpha chain family. In terms of assembly, homodimer. The RNAP catalytic core consists of 2 alpha, 1 beta, 1 beta' and 1 omega subunit. When a sigma factor is associated with the core the holoenzyme is formed, which can initiate transcription.

The enzyme catalyses RNA(n) + a ribonucleoside 5'-triphosphate = RNA(n+1) + diphosphate. Functionally, DNA-dependent RNA polymerase catalyzes the transcription of DNA into RNA using the four ribonucleoside triphosphates as substrates. This chain is DNA-directed RNA polymerase subunit alpha, found in Fusobacterium nucleatum subsp. nucleatum (strain ATCC 25586 / DSM 15643 / BCRC 10681 / CIP 101130 / JCM 8532 / KCTC 2640 / LMG 13131 / VPI 4355).